Here is an 89-residue protein sequence, read N- to C-terminus: DNA/RNA-binding protein Alba 1 (89 aa).

It belongs to the histone-like Alba family.

Its subcellular location is the cytoplasm. The protein localises to the chromosome. In terms of biological role, binds double-stranded DNA tightly but without sequence specificity. Involved in DNA compaction. The protein is DNA/RNA-binding protein Alba 1 of Archaeoglobus fulgidus (strain ATCC 49558 / DSM 4304 / JCM 9628 / NBRC 100126 / VC-16).